The primary structure comprises 92 residues: Small ribosomal subunit protein uS19 (92 aa).

Belongs to the universal ribosomal protein uS19 family.

Its function is as follows. Protein S19 forms a complex with S13 that binds strongly to the 16S ribosomal RNA. In Brucella anthropi (strain ATCC 49188 / DSM 6882 / CCUG 24695 / JCM 21032 / LMG 3331 / NBRC 15819 / NCTC 12168 / Alc 37) (Ochrobactrum anthropi), this protein is Small ribosomal subunit protein uS19.